The primary structure comprises 995 residues: Probable copper-transporting ATPase HMA5 (995 aa).

Over 1–299 the chain is Cytoplasmic; the sequence is MATKLLSLTC…QGEIKQYYKS (299 aa). 2 HMA domains span residues 51 to 117 and 129 to 195; these read SRAV…FEAS and QVCR…FEAV. The Cu(+) site is built by C62, C65, C140, and C143. Residues 204–270 form the HMA 3; degenerate domain; the sequence is SKIDLKIDGE…VIESTVFGHS (67 aa). Residues 300 to 321 form a helical membrane-spanning segment; it reads FLWSLVFTVPVFLTAMVFMYIP. Residues 322–340 are Extracellular-facing; sequence GIKDLLMFKVINMLTVGEI. A helical membrane pass occupies residues 341 to 360; that stretch reads IRCVLATPVQFVIGWRFYTG. Residues 361-367 lie on the Cytoplasmic side of the membrane; sequence SYKALRR. Residues 368–388 form a helical membrane-spanning segment; the sequence is GSANMDVLIALGTNAAYFYSL. Topologically, residues 389 to 406 are extracellular; the sequence is YTVLRAATSPDFKGVDFF. A helical membrane pass occupies residues 407–427; the sequence is ETSAMLISFIILGKYLEVMAK. Residues 428 to 561 are Cytoplasmic-facing; sequence GKTSQAIAKL…KAPVQKLADR (134 aa). The helical transmembrane segment at 562–584 threads the bilayer; that stretch reads ISKFFVPLVIFLSFSTWLAWFLA. Residues 585–605 lie on the Extracellular side of the membrane; the sequence is GKLHWYPESWIPSSMDSFELA. Residues 606–623 traverse the membrane as a helical segment; that stretch reads LQFGISVMVIACPCALGL. At 624–920 the chain is on the cytoplasmic side; that stretch reads ATPTAVMVGT…DLSRKTFSRI (297 aa). D661 functions as the 4-aspartylphosphate intermediate in the catalytic mechanism. Mg(2+)-binding residues include D866 and D870. A helical transmembrane segment spans residues 921-940; it reads RLNYVWALGYNLMGIPIAAG. Topologically, residues 941–952 are extracellular; sequence VLFPGTRFRLPP. A helical membrane pass occupies residues 953-971; the sequence is WIAGAAMAASSVSVVCCSL. At 972-995 the chain is on the cytoplasmic side; sequence LLKNYKRPKKLDHLEIREIQVERV.

It belongs to the cation transport ATPase (P-type) (TC 3.A.3) family. Type IB subfamily. In terms of assembly, interacts with ATX1. As to expression, expressed in roots and flowers.

The protein resides in the membrane. It catalyses the reaction Cu(+)(in) + ATP + H2O = Cu(+)(out) + ADP + phosphate + H(+). In terms of biological role, involved in copper import into the cell. May play a role in copper detoxification in roots. The polypeptide is Probable copper-transporting ATPase HMA5 (HMA5) (Arabidopsis thaliana (Mouse-ear cress)).